The sequence spans 281 residues: Release factor glutamine methyltransferase (281 aa).

Glu142 and Asn184 together coordinate S-adenosyl-L-methionine. Asn184–Tyr187 contacts substrate. The segment at Ala261–Pro281 is disordered.

The protein belongs to the protein N5-glutamine methyltransferase family. PrmC subfamily.

It catalyses the reaction L-glutaminyl-[peptide chain release factor] + S-adenosyl-L-methionine = N(5)-methyl-L-glutaminyl-[peptide chain release factor] + S-adenosyl-L-homocysteine + H(+). Functionally, methylates the class 1 translation termination release factors RF1/PrfA and RF2/PrfB on the glutamine residue of the universally conserved GGQ motif. This is Release factor glutamine methyltransferase from Streptomyces coelicolor (strain ATCC BAA-471 / A3(2) / M145).